Consider the following 256-residue polypeptide: Imidazole glycerol phosphate synthase subunit HisF (256 aa).

Catalysis depends on residues D11 and D130.

Belongs to the HisA/HisF family. Heterodimer of HisH and HisF.

The protein localises to the cytoplasm. The catalysed reaction is 5-[(5-phospho-1-deoxy-D-ribulos-1-ylimino)methylamino]-1-(5-phospho-beta-D-ribosyl)imidazole-4-carboxamide + L-glutamine = D-erythro-1-(imidazol-4-yl)glycerol 3-phosphate + 5-amino-1-(5-phospho-beta-D-ribosyl)imidazole-4-carboxamide + L-glutamate + H(+). The protein operates within amino-acid biosynthesis; L-histidine biosynthesis; L-histidine from 5-phospho-alpha-D-ribose 1-diphosphate: step 5/9. Functionally, IGPS catalyzes the conversion of PRFAR and glutamine to IGP, AICAR and glutamate. The HisF subunit catalyzes the cyclization activity that produces IGP and AICAR from PRFAR using the ammonia provided by the HisH subunit. The sequence is that of Imidazole glycerol phosphate synthase subunit HisF from Prochlorococcus marinus (strain NATL2A).